The sequence spans 468 residues: Tyrosine-protein phosphatase YopH (468 aa).

Positions 127–194 (ARGHVSSHSH…TVSPYGPEAR (68 aa)) are disordered. The segment covering 130 to 141 (HVSSHSHSALHA) has biased composition (low complexity). Residues 152–461 (SHLDPRTPPL…DVLIKLAEGQ (310 aa)) enclose the Tyrosine-protein phosphatase domain. Catalysis depends on Cys403, which acts as the Phosphocysteine intermediate.

The protein belongs to the protein-tyrosine phosphatase family. Non-receptor class subfamily.

The protein resides in the secreted. It carries out the reaction O-phospho-L-tyrosyl-[protein] + H2O = L-tyrosyl-[protein] + phosphate. Essential virulence determinant. This protein is a protein tyrosine phosphatase. The essential function of YopH in Yersinia pathogenesis is host-protein dephosphorylation. It contributes to the ability of the bacteria to resist phagocytosis by peritoneal macrophages. The chain is Tyrosine-protein phosphatase YopH (yopH) from Yersinia pseudotuberculosis serotype I (strain IP32953).